We begin with the raw amino-acid sequence, 281 residues long: Large ribosomal subunit protein mL46 (281 aa).

The transit peptide at 1-19 (MKVNLMLKRGLATATATAS) directs the protein to the mitochondrion. The span at 106–118 (RERSTKQEVKLSD) shows a compositional bias: basic and acidic residues. The disordered stretch occupies residues 106 to 141 (RERSTKQEVKLSDDSTVAFSNNQKEQSKDDVNRPVI). A compositionally biased stretch (polar residues) spans 119 to 129 (DSTVAFSNNQK).

It belongs to the mitochondrion-specific ribosomal protein mL46 family. Component of the mitochondrial large ribosomal subunit (mt-LSU). Mature yeast 74S mitochondrial ribosomes consist of a small (37S) and a large (54S) subunit. The 37S small subunit contains a 15S ribosomal RNA (15S mt-rRNA) and 34 different proteins. The 54S large subunit contains a 21S rRNA (21S mt-rRNA) and 46 different proteins.

The protein resides in the mitochondrion. Functionally, component of the mitochondrial ribosome (mitoribosome), a dedicated translation machinery responsible for the synthesis of mitochondrial genome-encoded proteins, including at least some of the essential transmembrane subunits of the mitochondrial respiratory chain. The mitoribosomes are attached to the mitochondrial inner membrane and translation products are cotranslationally integrated into the membrane. This is Large ribosomal subunit protein mL46 (MRPL17) from Saccharomyces cerevisiae (strain ATCC 204508 / S288c) (Baker's yeast).